The sequence spans 368 residues: Alanine racemase (368 aa).

The Proton acceptor; specific for D-alanine role is filled by Lys-34. Position 34 is an N6-(pyridoxal phosphate)lysine (Lys-34). Arg-132 contacts substrate. Tyr-261 acts as the Proton acceptor; specific for L-alanine in catalysis. Met-309 provides a ligand contact to substrate.

It belongs to the alanine racemase family. It depends on pyridoxal 5'-phosphate as a cofactor.

The catalysed reaction is L-alanine = D-alanine. It functions in the pathway amino-acid biosynthesis; D-alanine biosynthesis; D-alanine from L-alanine: step 1/1. In terms of biological role, catalyzes the interconversion of L-alanine and D-alanine. May also act on other amino acids. This Carboxydothermus hydrogenoformans (strain ATCC BAA-161 / DSM 6008 / Z-2901) protein is Alanine racemase (alr).